Reading from the N-terminus, the 75-residue chain is MISWHQFEHLKGLIYESEMAAMIYGRQIQRLESLPPTNDVLLAQSRANLKNEYQNKWGKASKDLHDYIQSLVEKK.

This is an uncharacterized protein from Enterobacteria phage T4 (Bacteriophage T4).